A 327-amino-acid chain; its full sequence is MHLFKDSLNLIVSSGNGGAGCVSFLREKFKAKGGPDGGDGGRGGDVIFKVKSNLKTLSLYRNGQKLSASNGKSGMGLKKSGAAGSDLIIFVPPNTSIYDADSNCMLFELKNFDDEVVVLKGGRGGLGNVNFKSSTKRTPRFAQPGESGLTLNLRLELSLIADIGLVGLPNAGKSSLISKITASRSRVANYPFTTKIPHFGVVRVSYNDLIIADLPGIIEGASKGIGLGFEFLRHISKTQILVFLIDVSSDDFMSAYDILINELRVYDIGLLKKKRIIVASKLDLEGATENFNQLKSILSEERVLGISIYDNIGINELVSEFFSLVKI.

An Obg domain is found at 2-160 (HLFKDSLNLI…LNLRLELSLI (159 aa)). The 166-residue stretch at 161-326 (ADIGLVGLPN…LVSEFFSLVK (166 aa)) folds into the OBG-type G domain. Residues 167 to 174 (GLPNAGKS), 192 to 196 (FTTKI), 213 to 216 (DLPG), 280 to 283 (SKLD), and 307 to 309 (SIY) each bind GTP. Mg(2+)-binding residues include Ser-174 and Thr-194.

Belongs to the TRAFAC class OBG-HflX-like GTPase superfamily. OBG GTPase family. As to quaternary structure, monomer. The cofactor is Mg(2+).

It localises to the cytoplasm. Its function is as follows. An essential GTPase which binds GTP, GDP and possibly (p)ppGpp with moderate affinity, with high nucleotide exchange rates and a fairly low GTP hydrolysis rate. Plays a role in control of the cell cycle, stress response, ribosome biogenesis and in those bacteria that undergo differentiation, in morphogenesis control. In Borrelia duttonii (strain Ly), this protein is GTPase Obg.